The sequence spans 261 residues: Cytochrome c oxidase subunit 3 (261 aa).

At 1–15 the chain is on the mitochondrial matrix side; sequence MTHQAHAYHMVDPSP. A helical transmembrane segment spans residues 16-34; it reads WPLTGAVAALLMTSGLAVW. At 35–40 the chain is on the mitochondrial intermembrane side; that stretch reads FHFHST. Residues 41–66 traverse the membrane as a helical segment; it reads TLMALGTVLLLLTMYQWWRDIIREGT. Topologically, residues 67 to 72 are mitochondrial matrix; sequence FQGHHT. A helical membrane pass occupies residues 73–105; it reads PPVQKGLRYGMILFITSEVFFFLGFFWAFYHAS. Over 106 to 128 the chain is Mitochondrial intermembrane; it reads LAPTPELGGCWPPTGITTLDPFE. Residues 129 to 152 traverse the membrane as a helical segment; sequence VPLLNTAVLLASGVTVTWAHHSIM. At 153-155 the chain is on the mitochondrial matrix side; sequence EGE. The helical transmembrane segment at 156–183 threads the bilayer; it reads RKQAIHSLTLTILLGFYFTFLQGLEYYD. At 184–190 the chain is on the mitochondrial intermembrane side; that stretch reads APFTIAD. The chain crosses the membrane as a helical span at residues 191–223; it reads GVYGSTFFVATGFHGLHVIIGSTFLAVCLLRQI. Topologically, residues 224-232 are mitochondrial matrix; that stretch reads RYHFTSEHH. The chain crosses the membrane as a helical span at residues 233 to 256; it reads FGFEAAAWYWHFVDVVWLFLYISI. Over 257 to 261 the chain is Mitochondrial intermembrane; the sequence is YWWGS.

It belongs to the cytochrome c oxidase subunit 3 family. Component of the cytochrome c oxidase (complex IV, CIV), a multisubunit enzyme composed of 14 subunits. The complex is composed of a catalytic core of 3 subunits MT-CO1, MT-CO2 and MT-CO3, encoded in the mitochondrial DNA, and 11 supernumerary subunits COX4I, COX5A, COX5B, COX6A, COX6B, COX6C, COX7A, COX7B, COX7C, COX8 and NDUFA4, which are encoded in the nuclear genome. The complex exists as a monomer or a dimer and forms supercomplexes (SCs) in the inner mitochondrial membrane with NADH-ubiquinone oxidoreductase (complex I, CI) and ubiquinol-cytochrome c oxidoreductase (cytochrome b-c1 complex, complex III, CIII), resulting in different assemblies (supercomplex SCI(1)III(2)IV(1) and megacomplex MCI(2)III(2)IV(2)).

It is found in the mitochondrion inner membrane. It carries out the reaction 4 Fe(II)-[cytochrome c] + O2 + 8 H(+)(in) = 4 Fe(III)-[cytochrome c] + 2 H2O + 4 H(+)(out). Component of the cytochrome c oxidase, the last enzyme in the mitochondrial electron transport chain which drives oxidative phosphorylation. The respiratory chain contains 3 multisubunit complexes succinate dehydrogenase (complex II, CII), ubiquinol-cytochrome c oxidoreductase (cytochrome b-c1 complex, complex III, CIII) and cytochrome c oxidase (complex IV, CIV), that cooperate to transfer electrons derived from NADH and succinate to molecular oxygen, creating an electrochemical gradient over the inner membrane that drives transmembrane transport and the ATP synthase. Cytochrome c oxidase is the component of the respiratory chain that catalyzes the reduction of oxygen to water. Electrons originating from reduced cytochrome c in the intermembrane space (IMS) are transferred via the dinuclear copper A center (CU(A)) of subunit 2 and heme A of subunit 1 to the active site in subunit 1, a binuclear center (BNC) formed by heme A3 and copper B (CU(B)). The BNC reduces molecular oxygen to 2 water molecules using 4 electrons from cytochrome c in the IMS and 4 protons from the mitochondrial matrix. This chain is Cytochrome c oxidase subunit 3 (mt-co3), found in Gadus morhua (Atlantic cod).